The chain runs to 395 residues: Phosphopentomutase (395 aa).

Mn(2+) is bound by residues D12, D289, H294, D330, H331, and H342.

Belongs to the phosphopentomutase family. Requires Mn(2+) as cofactor.

Its subcellular location is the cytoplasm. It catalyses the reaction 2-deoxy-alpha-D-ribose 1-phosphate = 2-deoxy-D-ribose 5-phosphate. The enzyme catalyses alpha-D-ribose 1-phosphate = D-ribose 5-phosphate. It functions in the pathway carbohydrate degradation; 2-deoxy-D-ribose 1-phosphate degradation; D-glyceraldehyde 3-phosphate and acetaldehyde from 2-deoxy-alpha-D-ribose 1-phosphate: step 1/2. Functionally, isomerase that catalyzes the conversion of deoxy-ribose 1-phosphate (dRib-1-P) and ribose 1-phosphate (Rib-1-P) to deoxy-ribose 5-phosphate (dRib-5-P) and ribose 5-phosphate (Rib-5-P), respectively. The protein is Phosphopentomutase of Levilactobacillus brevis (strain ATCC 367 / BCRC 12310 / CIP 105137 / JCM 1170 / LMG 11437 / NCIMB 947 / NCTC 947) (Lactobacillus brevis).